A 259-amino-acid chain; its full sequence is Deoxyribose-phosphate aldolase (259 aa).

D102 serves as the catalytic Proton donor/acceptor. K167 (schiff-base intermediate with acetaldehyde) is an active-site residue. Catalysis depends on K201, which acts as the Proton donor/acceptor.

This sequence belongs to the DeoC/FbaB aldolase family. DeoC type 2 subfamily.

Its subcellular location is the cytoplasm. The catalysed reaction is 2-deoxy-D-ribose 5-phosphate = D-glyceraldehyde 3-phosphate + acetaldehyde. Its pathway is carbohydrate degradation; 2-deoxy-D-ribose 1-phosphate degradation; D-glyceraldehyde 3-phosphate and acetaldehyde from 2-deoxy-alpha-D-ribose 1-phosphate: step 2/2. Its function is as follows. Catalyzes a reversible aldol reaction between acetaldehyde and D-glyceraldehyde 3-phosphate to generate 2-deoxy-D-ribose 5-phosphate. This is Deoxyribose-phosphate aldolase from Escherichia coli O8 (strain IAI1).